A 224-amino-acid polypeptide reads, in one-letter code: Transmembrane protein C16orf54 (224 aa).

The O-linked (GalNAc...) threonine glycan is linked to threonine 4. A helical transmembrane segment spans residues 32–52 (IPIMLVLATLAALFILTTAVL). Disordered regions lie at residues 104–138 (TDRA…SNLG) and 152–203 (WGPQ…GLQP). Phosphothreonine occurs at positions 112 and 116. Serine 194 carries the phosphoserine modification.

O-glycosylated with core 1 or possibly core 8 glycans.

Its subcellular location is the membrane. The sequence is that of Transmembrane protein C16orf54 (C16orf54) from Homo sapiens (Human).